Here is a 500-residue protein sequence, read N- to C-terminus: V-type proton ATPase subunit B (500 aa).

Belongs to the ATPase alpha/beta chains family. In terms of assembly, V-ATPase is a heteromultimeric enzyme composed of a peripheral catalytic V1 complex (main components: subunits A, B, C, D, E, and F) attached to an integral membrane V0 proton pore complex (main component: the proteolipid protein).

Non-catalytic subunit of the peripheral V1 complex of vacuolar ATPase. V-ATPase is responsible for acidifying a variety of intracellular compartments in eukaryotic cells. In Cyanidium caldarium (Red alga), this protein is V-type proton ATPase subunit B.